We begin with the raw amino-acid sequence, 247 residues long: DNA polymerase sliding clamp (247 aa).

The protein belongs to the PCNA family. As to quaternary structure, homotrimer. The subunits circularize to form a toroid; DNA passes through its center. Replication factor C (RFC) is required to load the toroid on the DNA.

Functionally, sliding clamp subunit that acts as a moving platform for DNA processing. Responsible for tethering the catalytic subunit of DNA polymerase and other proteins to DNA during high-speed replication. This is DNA polymerase sliding clamp from Methanocorpusculum labreanum (strain ATCC 43576 / DSM 4855 / Z).